The chain runs to 542 residues: Chaperonin GroEL 3 (542 aa).

Residues Thr-30–Pro-33, Lys-51, Asp-87–Thr-91, Gly-415, and Asp-496 each bind ATP.

This sequence belongs to the chaperonin (HSP60) family. As to quaternary structure, forms a cylinder of 14 subunits composed of two heptameric rings stacked back-to-back. Interacts with the co-chaperonin GroES.

Its subcellular location is the cytoplasm. The catalysed reaction is ATP + H2O + a folded polypeptide = ADP + phosphate + an unfolded polypeptide.. Together with its co-chaperonin GroES, plays an essential role in assisting protein folding. The GroEL-GroES system forms a nano-cage that allows encapsulation of the non-native substrate proteins and provides a physical environment optimized to promote and accelerate protein folding. This Sinorhizobium medicae (strain WSM419) (Ensifer medicae) protein is Chaperonin GroEL 3.